A 1217-amino-acid chain; its full sequence is ATP-dependent helicase/nuclease subunit A (1217 aa).

A UvrD-like helicase ATP-binding domain is found at 10 to 475; that stretch reads VIWTDAQWQS…IDLSQNFRSR (466 aa). Position 31–38 (31–38) interacts with ATP; the sequence is AAAGSGKT. Positions 476 to 786 constitute a UvrD-like helicase C-terminal domain; the sequence is KEVLSTTNYI…RMMTIHSSKG (311 aa).

The protein belongs to the helicase family. AddA subfamily. In terms of assembly, heterodimer of AddA and AddB/RexB. Mg(2+) serves as cofactor.

The enzyme catalyses Couples ATP hydrolysis with the unwinding of duplex DNA by translocating in the 3'-5' direction.. It carries out the reaction ATP + H2O = ADP + phosphate + H(+). In terms of biological role, the heterodimer acts as both an ATP-dependent DNA helicase and an ATP-dependent, dual-direction single-stranded exonuclease. Recognizes the chi site generating a DNA molecule suitable for the initiation of homologous recombination. The AddA nuclease domain is required for chi fragment generation; this subunit has the helicase and 3' -&gt; 5' nuclease activities. The polypeptide is ATP-dependent helicase/nuclease subunit A (Staphylococcus aureus (strain NCTC 8325 / PS 47)).